A 507-amino-acid polypeptide reads, in one-letter code: MSNPPVFTTSQGCPVSDPFTTQRIPLDSTGYKYAPPIGPLLLQDFKLIDTLSHFDRERIPERVVHAKGAGAYGVFEVTDDITDVCSAKFLDTVGKKTRIFTRFSTVGGEKGSADTARDPRGFATKFYTEDGNLDLVYNNTPIFFIRDPIKFPHFIHTQKRNPATNLKDPNMFWDYLTANDESLHQVMYLFSNRGTPASYRTMNGYSGHTYKWYNSKGEWVYVQVHFIANQGVHNLLDEEAGRLAGEDPDHSTRDLWEAIEKGDYPSWECYIQTMTLEQSKKLPFSVFDLTKVWPHKDFPLRHFGRFTLNENPKNYYAETEQIAFSPSHTVPGMEPSNDPVLQSRLFSYPDTHRHRLGPNYHQIPVNCPLKSGSFNPINRDGPMCVDGNLGGTPNYANAYNCPIQYAVSPKASGNKPDEKYTGEVVPYHWEHTDYDYFQPKMFWKVLGRTPGEQESLVKNVANHVSAADEFIQDRVYEYFSKAEPIIGDLIRKKVQELKRKASSPSKI.

Residues H65 and N138 contribute to the active site. A heme-binding site is contributed by Y348. The Microbody targeting signal signature appears at 505–507; it reads SKI.

It belongs to the catalase family. In terms of assembly, homotetramer. Heme is required as a cofactor.

It is found in the peroxisome matrix. The catalysed reaction is 2 H2O2 = O2 + 2 H2O. Functionally, catalyzes the degradation of hydrogen peroxide (H(2)O(2)) generated by peroxisomal oxidases to water and oxygen, thereby protecting cells from the toxic effects of hydrogen peroxide. The polypeptide is Peroxisomal catalase (PXP9) (Pichia angusta (Yeast)).